A 245-amino-acid polypeptide reads, in one-letter code: tRNA pseudouridine synthase A (245 aa).

The active-site Nucleophile is aspartate 52. Tyrosine 110 contacts substrate.

It belongs to the tRNA pseudouridine synthase TruA family. As to quaternary structure, homodimer.

It carries out the reaction uridine(38/39/40) in tRNA = pseudouridine(38/39/40) in tRNA. In terms of biological role, formation of pseudouridine at positions 38, 39 and 40 in the anticodon stem and loop of transfer RNAs. The protein is tRNA pseudouridine synthase A of Pseudothermotoga lettingae (strain ATCC BAA-301 / DSM 14385 / NBRC 107922 / TMO) (Thermotoga lettingae).